The primary structure comprises 427 residues: Serine--tRNA ligase (427 aa).

233 to 235 lines the L-serine pocket; the sequence is TAE. An ATP-binding site is contributed by 264–266; that stretch reads RSE. Glutamate 287 contacts L-serine. Residue 351 to 354 coordinates ATP; that stretch reads EISS. Serine 386 contacts L-serine.

It belongs to the class-II aminoacyl-tRNA synthetase family. Type-1 seryl-tRNA synthetase subfamily. As to quaternary structure, homodimer. The tRNA molecule binds across the dimer.

The protein resides in the cytoplasm. The catalysed reaction is tRNA(Ser) + L-serine + ATP = L-seryl-tRNA(Ser) + AMP + diphosphate + H(+). It carries out the reaction tRNA(Sec) + L-serine + ATP = L-seryl-tRNA(Sec) + AMP + diphosphate + H(+). Its pathway is aminoacyl-tRNA biosynthesis; selenocysteinyl-tRNA(Sec) biosynthesis; L-seryl-tRNA(Sec) from L-serine and tRNA(Sec): step 1/1. In terms of biological role, catalyzes the attachment of serine to tRNA(Ser). Is also able to aminoacylate tRNA(Sec) with serine, to form the misacylated tRNA L-seryl-tRNA(Sec), which will be further converted into selenocysteinyl-tRNA(Sec). In Thiobacillus denitrificans (strain ATCC 25259 / T1), this protein is Serine--tRNA ligase.